The sequence spans 339 residues: NmrA-like family domain-containing oxidoreductase cpsB (339 aa).

Residue Lys142 coordinates NADP(+).

Belongs to the NmrA-type oxidoreductase family.

It carries out the reaction didehydrocampesine A + 2 AH2 = campesine A + 2 A. Its pathway is alkaloid biosynthesis. In terms of biological role, oxidoreductase; part of the gene cluster that mediates the biosynthesis of campesine G, a dimeric indole piperazine alkaloid that shows good insecticidal activity Galleria mellonella. Within the pathway, cpsB reduces the unstable (S,S)-trypyl-valyl dihydropiperazine (didehydrocampesine A) intermediate to (S, S)-trypyl-valyl-piperazine (campesine A) using two equivalents of NAD(P)H. The non-canonical non-ribosomal peptide synthetase cpsA catalyzes the first steps of the pathway by producing L-tryptophanal and L-valinal from their respective amino-acids. These products condensate spontaneously to form trypyl-valyl pyrazine also known as didehydrocampesine A. The NmrA-like family domain-containing oxidoreductase cpsB is the next enzyme in cps pathway and reduces the unstable didehydrocampesine A to campesine A. The methyltransferase cpsF and the acetyltransferase cpsE both recognize N13 of piperazine ring to carry out methylation and acetylation of campesine A to produce campesine C and B, respectively. The cytochrome P450 monooxygenase cpsD then acts as a dimerase that catalyzes oxidative heterocoupling between campesine B and C to produce heterodimers with unexpected 6/5/6/6/6/6/5/6 eight-ring scaffold called campesine D. Finally,the cytochrome P450 monooxygenase cpsC is a regioselective dehydrogenase that catalyzes dehydrogenation reaction towards C2-N1 to produce campesine G. This is NmrA-like family domain-containing oxidoreductase cpsB from Aspergillus campestris (strain IBT 28561).